A 316-amino-acid chain; its full sequence is Protein C4 (316 aa).

The protein belongs to the poxviridae OPG031 protein family.

It localises to the host cytoplasm. It is found in the host nucleus. In terms of biological role, plays a role in the inhibition of host NF-kappa-B activation. Mechanistically, blocks the subunit p65/RELA translocation into the host nucleus. The sequence is that of Protein C4 (OPG031) from Vaccinia virus (strain Western Reserve) (VACV).